A 314-amino-acid polypeptide reads, in one-letter code: 4-hydroxy-3-methylbut-2-enyl diphosphate reductase (314 aa).

C12 contributes to the [4Fe-4S] cluster binding site. Residues H41 and H74 each coordinate (2E)-4-hydroxy-3-methylbut-2-enyl diphosphate. The dimethylallyl diphosphate site is built by H41 and H74. Isopentenyl diphosphate-binding residues include H41 and H74. C96 lines the [4Fe-4S] cluster pocket. Residue H124 coordinates (2E)-4-hydroxy-3-methylbut-2-enyl diphosphate. Position 124 (H124) interacts with dimethylallyl diphosphate. H124 is a binding site for isopentenyl diphosphate. Catalysis depends on E126, which acts as the Proton donor. T167 contacts (2E)-4-hydroxy-3-methylbut-2-enyl diphosphate. Position 197 (C197) interacts with [4Fe-4S] cluster. (2E)-4-hydroxy-3-methylbut-2-enyl diphosphate contacts are provided by S225, S226, N227, and S269. Dimethylallyl diphosphate is bound by residues S225, S226, N227, and S269. The isopentenyl diphosphate site is built by S225, S226, N227, and S269.

It belongs to the IspH family. [4Fe-4S] cluster is required as a cofactor.

The catalysed reaction is isopentenyl diphosphate + 2 oxidized [2Fe-2S]-[ferredoxin] + H2O = (2E)-4-hydroxy-3-methylbut-2-enyl diphosphate + 2 reduced [2Fe-2S]-[ferredoxin] + 2 H(+). It catalyses the reaction dimethylallyl diphosphate + 2 oxidized [2Fe-2S]-[ferredoxin] + H2O = (2E)-4-hydroxy-3-methylbut-2-enyl diphosphate + 2 reduced [2Fe-2S]-[ferredoxin] + 2 H(+). It functions in the pathway isoprenoid biosynthesis; dimethylallyl diphosphate biosynthesis; dimethylallyl diphosphate from (2E)-4-hydroxy-3-methylbutenyl diphosphate: step 1/1. Its pathway is isoprenoid biosynthesis; isopentenyl diphosphate biosynthesis via DXP pathway; isopentenyl diphosphate from 1-deoxy-D-xylulose 5-phosphate: step 6/6. Its function is as follows. Catalyzes the conversion of 1-hydroxy-2-methyl-2-(E)-butenyl 4-diphosphate (HMBPP) into a mixture of isopentenyl diphosphate (IPP) and dimethylallyl diphosphate (DMAPP). Acts in the terminal step of the DOXP/MEP pathway for isoprenoid precursor biosynthesis. This chain is 4-hydroxy-3-methylbut-2-enyl diphosphate reductase, found in Idiomarina loihiensis (strain ATCC BAA-735 / DSM 15497 / L2-TR).